Reading from the N-terminus, the 712-residue chain is Polyribonucleotide nucleotidyltransferase (712 aa).

2 residues coordinate Mg(2+): aspartate 487 and aspartate 493. A KH domain is found at 554–613 (PKIITMTINPDKIRDVIGPSGKQINKIIEETGVKIDIEQDGTVFISSINQEMNDKAKKII). Residues 623-691 (GEIYEGKVKR…KQGRVNLSRK (69 aa)) form the S1 motif domain.

The protein belongs to the polyribonucleotide nucleotidyltransferase family. Requires Mg(2+) as cofactor.

Its subcellular location is the cytoplasm. It catalyses the reaction RNA(n+1) + phosphate = RNA(n) + a ribonucleoside 5'-diphosphate. In terms of biological role, involved in mRNA degradation. Catalyzes the phosphorolysis of single-stranded polyribonucleotides processively in the 3'- to 5'-direction. This chain is Polyribonucleotide nucleotidyltransferase, found in Bacillus cereus (strain AH820).